Consider the following 1323-residue polypeptide: ABC transporter C family member 12 (1323 aa).

Residues 110 to 396 (HCISLFFYSI…LPILIALGIQ (287 aa)) form the ABC transmembrane type-1 1 domain. A run of 6 helical transmembrane segments spans residues 111 to 131 (CISL…PEIL), 152 to 172 (MGYY…FCNY), 227 to 247 (VFGI…CLAL), 252 to 272 (IGWP…FNGL), 338 to 358 (ILIA…FSTY), and 375 to 395 (SYLN…ALGI). In terms of domain architecture, ABC transporter 1 spans 428–652 (VYMKNSTTTW…KLEFASLLQE (225 aa)). 464-471 (GSVGSGKS) contacts ATP. The segment at 657–695 (ENTKGDDSDDDDDKKDDDKKEEKVEKPKQSDKDGTLISE) is disordered. Over residues 672 to 690 (DDDKKEEKVEKPKQSDKDG) the composition is skewed to basic and acidic residues. 5 consecutive transmembrane segments (helical) span residues 712–732 (VTAG…LETG), 772–792 (IYIG…FSFF), 840–860 (LIAT…ATLI), 862–882 (ISII…LFFI), and 952–972 (WLGL…CIFI). The 291-residue stretch at 720-1010 (FLFAMILFLL…GVLQAADTET (291 aa)) folds into the ABC transmembrane type-1 2 domain. Residues 1047 to 1281 (IKFDNLVMRY…QNGLLTWLVN (235 aa)) form the ABC transporter 2 domain. 1081-1088 (GRTGAGKS) is an ATP binding site.

The protein belongs to the ABC transporter superfamily. ABCC family. Conjugate transporter (TC 3.A.1.208) subfamily.

The protein localises to the membrane. In Dictyostelium discoideum (Social amoeba), this protein is ABC transporter C family member 12 (abcC12).